The chain runs to 757 residues: MMRGFKQRLIKKTTGSSSSSSSKKKDKEKEKEKSSTTSSTSKKPASASSSSHGTTHSSASSTGSKSTTEKGKQSGSVPSQGKHHSSSTSKTKTATTPSSSSSSSRSSSVSRSGSSSTKKTSSRKGQEQSKQSQQPSQSQKQGSSSSSAAIMNPTPVLTVTKDDKSTSGEDHAHPTLLGAVSAVPSSPISNASGTAVSSDVENGNSNNNNMNINTSNTQDANHASSQSIDIPRSSHSFERLPTPTKLNPDTDLELIKTPQRHSSSRFEPSRYTPLTKLPNFNEVSPEERIPLFIAKVDQCNTMFDFNDPSFDIQGKEIKRSTLDELIEFLVTNRFTYTNEMYAHVVNMFKINLFRPIPPPVNPVGDIYDPDEDEPVNELAWPHMQAVYEFFLRFVESPDFNHQIAKQYIDQDFILKLLELFDSEDIRERDCLKTTLHRIYGKFLSLRSFIRRSMNNIFLQFIYETEKFNGVAELLEILGSIINGFALPLKEEHKVFLVRILIPLHKVRCLSLYHPQLAYCIVQFLEKDPLLTEEVVMGLLRYWPKINSTKEIMFLNEIEDIFEVIEPLEFIKVEVPLFVQLAKCISSPHFQVAEKVLSYWNNEYFLNLCIENAEVILPIIFPALYELTSQLELDTANGEDSISDPYMLVEQAINSGSWNRAIHAMAFKALKIFLETNPVLYENCNALYLSSVKETQQRKVQREENWSKLEEYVKNLRINNDKDQYTIKNPELRNSFNTASENNTLNEENENDCDSEIQ.

Residues 1–11 (MMRGFKQRLIK) are compositionally biased toward basic residues. Disordered regions lie at residues 1-172 (MMRG…EDHA) and 188-250 (ISNA…NPDT). The span at 12 to 21 (KTTGSSSSSS) shows a compositional bias: low complexity. Residues 23 to 34 (KKKDKEKEKEKS) show a composition bias toward basic and acidic residues. 3 stretches are compositionally biased toward low complexity: residues 35–66 (STTS…GSKS), 86–119 (SSTS…STKK), and 128–147 (QSKQ…SSSS). Residues 160-172 (TKDDKSTSGEDHA) are compositionally biased toward basic and acidic residues. Over residues 197–216 (SSDVENGNSNNNNMNINTSN) the composition is skewed to low complexity. Residues 217-228 (TQDANHASSQSI) are compositionally biased toward polar residues. Residues threonine 242 and threonine 257 each carry the phosphothreonine modification. The interval 734–757 (SFNTASENNTLNEENENDCDSEIQ) is disordered. Positions 746 to 757 (EENENDCDSEIQ) are enriched in acidic residues.

The protein belongs to the phosphatase 2A regulatory subunit B family. In terms of assembly, PP2A consists of a common heterodimeric core enzyme, composed of a 36 kDa catalytic subunit (subunit C) and a 65 kDa constant regulatory subunit (PR65 or subunit A), that associates with a variety of regulatory subunits. Proteins that associate with the core dimer include three families of regulatory subunits B (the R2/B/PR55/B55, R3/B''/PR72/PR130/PR59 and R5/B'/B56 families), the 48 kDa variable regulatory subunit, viral proteins, and cell signaling molecules.

Its subcellular location is the cytoplasm. The protein localises to the nucleus. The B regulatory subunit might modulate substrate selectivity and catalytic activity, and might also direct the localization of the catalytic enzyme to a particular subcellular compartment. In terms of biological role, multicopy suppressor of ROX3 and HSP60. This is Serine/threonine-protein phosphatase 2A 56 kDa regulatory subunit delta isoform (RTS1) from Saccharomyces cerevisiae (strain ATCC 204508 / S288c) (Baker's yeast).